Reading from the N-terminus, the 316-residue chain is MSDISKASLPKAIFLMGPTASGKTALAIELRKILPVELISVDSALIYKGMDIGTAKPNAEELLAAPHRLLNIRDPSQAYSAADFRRDALAEMADITAAGRIPLLVGGTMLYFKALLEGLSPLPSADPEVRARIEQQAAEQGWESLHRQLQEIDPVAAARIHPNDPQRLSRALEVFFISGKTLTELTQTSGDALPYQVHQFAIAPASRELLHQRIEQRFHQMLASGFEAEVRALFARGDLHTDLPSIRCVGYRQMWSYLEGEISYDEMVYRGVCATRQLAKRQITWLRGWEGVHWLDSEKPEQARDEVLQVVGAIAG.

ATP is bound at residue 17–24 (GPTASGKT). A substrate-binding site is contributed by 19 to 24 (TASGKT). Interaction with substrate tRNA stretches follow at residues 42–45 (DSAL), 166–170 (QRLSR), 247–252 (RCVGYR), and 280–287 (KRQITWLR).

Belongs to the IPP transferase family. As to quaternary structure, monomer. The cofactor is Mg(2+).

The catalysed reaction is adenosine(37) in tRNA + dimethylallyl diphosphate = N(6)-dimethylallyladenosine(37) in tRNA + diphosphate. Functionally, catalyzes the transfer of a dimethylallyl group onto the adenine at position 37 in tRNAs that read codons beginning with uridine, leading to the formation of N6-(dimethylallyl)adenosine (i(6)A). This Escherichia coli O81 (strain ED1a) protein is tRNA dimethylallyltransferase.